A 405-amino-acid chain; its full sequence is Acetate kinase (405 aa).

N7 serves as a coordination point for Mg(2+). K14 lines the ATP pocket. R99 lines the substrate pocket. The active-site Proton donor/acceptor is the D156. 215 to 219 (HLGNG) provides a ligand contact to ATP. E391 provides a ligand contact to Mg(2+).

This sequence belongs to the acetokinase family. Homodimer. Requires Mg(2+) as cofactor. Mn(2+) is required as a cofactor.

Its subcellular location is the cytoplasm. It carries out the reaction acetate + ATP = acetyl phosphate + ADP. It participates in metabolic intermediate biosynthesis; acetyl-CoA biosynthesis; acetyl-CoA from acetate: step 1/2. Catalyzes the formation of acetyl phosphate from acetate and ATP. Can also catalyze the reverse reaction. The chain is Acetate kinase from Trichormus variabilis (strain ATCC 29413 / PCC 7937) (Anabaena variabilis).